We begin with the raw amino-acid sequence, 456 residues long: Bifunctional protein GlmU (456 aa).

The interval 1-231 (MERTCLAIIL…EEELTGCNTR (231 aa)) is pyrophosphorylase. UDP-N-acetyl-alpha-D-glucosamine-binding positions include 10-13 (LAAG), Lys-24, Gln-77, and 82-83 (GT). Asp-107 contributes to the Mg(2+) binding site. Residues Gly-143, Glu-157, Asn-172, and Asn-229 each contribute to the UDP-N-acetyl-alpha-D-glucosamine site. Asn-229 is a binding site for Mg(2+). Positions 232–252 (AELAYIERLWQQRRRQELMLA) are linker. Residues 253 to 456 (GVSMVAPETV…AARKKVKAAE (204 aa)) are N-acetyltransferase. Residues Arg-318 and Lys-336 each coordinate UDP-N-acetyl-alpha-D-glucosamine. Catalysis depends on His-348, which acts as the Proton acceptor. UDP-N-acetyl-alpha-D-glucosamine is bound by residues Tyr-351 and Asn-362. Residues Ala-365, 371-372 (NY), Ser-390, Ser-408, and Arg-425 each bind acetyl-CoA.

The protein in the N-terminal section; belongs to the N-acetylglucosamine-1-phosphate uridyltransferase family. This sequence in the C-terminal section; belongs to the transferase hexapeptide repeat family. Homotrimer. The cofactor is Mg(2+).

It localises to the cytoplasm. The enzyme catalyses alpha-D-glucosamine 1-phosphate + acetyl-CoA = N-acetyl-alpha-D-glucosamine 1-phosphate + CoA + H(+). It carries out the reaction N-acetyl-alpha-D-glucosamine 1-phosphate + UTP + H(+) = UDP-N-acetyl-alpha-D-glucosamine + diphosphate. It participates in nucleotide-sugar biosynthesis; UDP-N-acetyl-alpha-D-glucosamine biosynthesis; N-acetyl-alpha-D-glucosamine 1-phosphate from alpha-D-glucosamine 6-phosphate (route II): step 2/2. The protein operates within nucleotide-sugar biosynthesis; UDP-N-acetyl-alpha-D-glucosamine biosynthesis; UDP-N-acetyl-alpha-D-glucosamine from N-acetyl-alpha-D-glucosamine 1-phosphate: step 1/1. It functions in the pathway bacterial outer membrane biogenesis; LPS lipid A biosynthesis. Its function is as follows. Catalyzes the last two sequential reactions in the de novo biosynthetic pathway for UDP-N-acetylglucosamine (UDP-GlcNAc). The C-terminal domain catalyzes the transfer of acetyl group from acetyl coenzyme A to glucosamine-1-phosphate (GlcN-1-P) to produce N-acetylglucosamine-1-phosphate (GlcNAc-1-P), which is converted into UDP-GlcNAc by the transfer of uridine 5-monophosphate (from uridine 5-triphosphate), a reaction catalyzed by the N-terminal domain. This chain is Bifunctional protein GlmU, found in Sinorhizobium fredii (strain NBRC 101917 / NGR234).